Consider the following 339-residue polypeptide: 2-keto-3-deoxygluconate permease (339 aa).

A run of 10 helical transmembrane segments spans residues 10-30 (IPGG…TFAP), 42-62 (GLIS…GASI), 77-97 (LVVT…RILP), 100-120 (GVEV…AMDM), 141-161 (AFVL…LGTA), 163-183 (IASF…VGFA), 199-219 (VQTL…LSVI), 224-244 (LLGV…LIVA), 254-274 (TAGI…VLIA), and 289-309 (TLVA…TAMW). The segment at 315 to 339 (GGDGTVPKEDAVEEKAEQQRRRIIK) is disordered. Over residues 320–339 (VPKEDAVEEKAEQQRRRIIK) the composition is skewed to basic and acidic residues.

It belongs to the KdgT transporter family.

It is found in the cell inner membrane. The catalysed reaction is 2-dehydro-3-deoxy-D-gluconate(in) + H(+)(in) = 2-dehydro-3-deoxy-D-gluconate(out) + H(+)(out). Its activity is regulated as follows. Uptake is inhibited by the protonophore uncouplers carbonyl cyanide m-chlorophenylhydrazone (CCCP) and 2,4-dinitrophenol, and by NaN(3). In terms of biological role, catalyzes the proton-dependent uptake of 2-keto-3-deoxygluconate (KDG) into the cell. Can also mediate the uptake of glucuronate with a low affinity, and may mediate the uptake of 5-keto-4-deoxyuronate (DKI) and 2,5-diketo-3-deoxygluconate (DKII), which are intermediates in pectin degradation. In Dickeya chrysanthemi (Pectobacterium chrysanthemi), this protein is 2-keto-3-deoxygluconate permease.